A 536-amino-acid chain; its full sequence is Phosphoenolpyruvate carboxykinase (ATP) (536 aa).

Substrate-binding residues include arginine 62, tyrosine 203, and lysine 209. ATP contacts are provided by residues lysine 209, histidine 228, and 244 to 252; that span reads GLSGTGKTT. Residues lysine 209 and histidine 228 each contribute to the Mn(2+) site. Aspartate 265 contacts Mn(2+). ATP contacts are provided by residues glutamate 293, arginine 329, 445 to 446, and threonine 451; that span reads RI. Arginine 329 is a binding site for substrate.

Belongs to the phosphoenolpyruvate carboxykinase (ATP) family. In terms of assembly, monomer. Requires Mn(2+) as cofactor.

Its subcellular location is the cytoplasm. The catalysed reaction is oxaloacetate + ATP = phosphoenolpyruvate + ADP + CO2. The protein operates within carbohydrate biosynthesis; gluconeogenesis. Involved in the gluconeogenesis. Catalyzes the conversion of oxaloacetate (OAA) to phosphoenolpyruvate (PEP) through direct phosphoryl transfer between the nucleoside triphosphate and OAA. The chain is Phosphoenolpyruvate carboxykinase (ATP) from Actinobacillus pleuropneumoniae serotype 7 (strain AP76).